Consider the following 218-residue polypeptide: Large ribosomal subunit protein uL1 (218 aa).

It belongs to the universal ribosomal protein uL1 family. As to quaternary structure, part of the 50S ribosomal subunit.

Functionally, binds directly to 23S rRNA. Probably involved in E site tRNA release. Protein L1 is also a translational repressor protein, it controls the translation of its operon by binding to its mRNA. This chain is Large ribosomal subunit protein uL1, found in Metallosphaera sedula (strain ATCC 51363 / DSM 5348 / JCM 9185 / NBRC 15509 / TH2).